Reading from the N-terminus, the 144-residue chain is NADH-ubiquinone oxidoreductase chain 6 (144 aa).

A run of 5 helical transmembrane segments spans residues 1 to 21 (MLGSFFFLAIISCVMSYINVD), 26 to 46 (SFFLIFSLLMVMPLISFFLHV), 47 to 67 (WFSYFICLLFLSGIFVILVYF), 76 to 96 (VVTPFYFVGGVLSVFFFYPFF), and 108 to 128 (FYFSVYWMLLVWVIFVLIFFM).

This sequence belongs to the complex I subunit 6 family.

The protein resides in the mitochondrion membrane. The enzyme catalyses a ubiquinone + NADH + 5 H(+)(in) = a ubiquinol + NAD(+) + 4 H(+)(out). Its function is as follows. Core subunit of the mitochondrial membrane respiratory chain NADH dehydrogenase (Complex I) that is believed to belong to the minimal assembly required for catalysis. Complex I functions in the transfer of electrons from NADH to the respiratory chain. The immediate electron acceptor for the enzyme is believed to be ubiquinone. The protein is NADH-ubiquinone oxidoreductase chain 6 (ND6) of Ascaris suum (Pig roundworm).